The primary structure comprises 394 residues: RNA demethylase ALKBH5 (394 aa).

Disordered regions lie at residues 1–26 (MAAA…YKAG) and 48–83 (AEPY…EEAR). An N-acetylalanine modification is found at A2. K57 is covalently cross-linked (Glycyl lysine isopeptide (Lys-Gly) (interchain with G-Cter in ubiquitin)). Over residues 59–83 (KYPEDSDPERSDFEEQQLQKEEEAR) the composition is skewed to basic and acidic residues. Phosphoserine occurs at positions 64 and 69. Positions 67–116 (ERSDFEEQQLQKEEEARKVKSGIRQMRLFSQDECAKIEARIDEVVSRAEK) form a coiled coil. Residue K86 forms a Glycyl lysine isopeptide (Lys-Gly) (interchain with G-Cter in SUMO1) linkage. S87 is modified (phosphoserine). The residue at position 132 (K132) is an N6-acetyllysine. Y139 is an active-site residue. Residues N193, Y195, and H204 each coordinate 2-oxoglutarate. A disulfide bridge links C230 with C267. K235 bears the N6-acetyllysine mark. 2-oxoglutarate is bound by residues H266 and R277. The interval 298 to 394 (SSSVLPPSYA…PARKVKMRRH (97 aa)) is disordered. K321 participates in a covalent cross-link: Glycyl lysine isopeptide (Lys-Gly) (interchain with G-Cter in SUMO1). Phosphoserine is present on S325. K328 is covalently cross-linked (Glycyl lysine isopeptide (Lys-Gly) (interchain with G-Cter in SUMO2)). Over residues 328–349 (KADPDAAHRPRILEMDKEENRR) the composition is skewed to basic and acidic residues. A phosphoserine mark is found at S371 and S384.

The protein belongs to the alkB family. As to quaternary structure, monomer. Interacts with RBM33; promoting desumoylation by SENP1 and recruitment to N(6)-methyladenosine-containing mRNAs. Interacts (when acetylated by KAT8) with PSPC1; interaction facilitates recognition of N(6)-methyladenosine (m6A) mRNA. The cofactor is Fe(2+). Phosphorylated at Ser-87 and Ser-325 in response to reactive oxygen species (ROS), promoting sumoylation and inactivation. In terms of processing, acetylated by KAT8 at Lys-235, promoting interaction with PSPC1, thereby facilitating recognition of N(6)-methyladenosine (m6A) mRNA by ALKBH5. Deacetylated at Lys-235 by HDAC7. Post-translationally, sumoylated at Lys-86 and Lys-321 by PIAS4 following phosphorylation at Ser-87 and Ser-325 in response to reactive oxygen species (ROS), inhibiting the RNA demethylase activity. Desumoylated by SENP1; relieving RNA demethylase inhibition, leading to N(6)-methyladenosine-containing mRNAs demethylation. Ubiquitinated at Lys-57 via 'Lys-48'-linked polyubiquitin chain, leading to its degradation by the proteasome. Deubiquitinated at Lys-57 by USP9X, promoting its stabilizazion.

The protein localises to the nucleus speckle. The enzyme catalyses an N(6)-methyladenosine in mRNA + 2-oxoglutarate + O2 = an adenosine in mRNA + formaldehyde + succinate + CO2. With respect to regulation, RNA demethylase activity is inhibited following sumoylation. Inhibition is relieved following desumoylation. Its function is as follows. Dioxygenase that specifically demethylates N(6)-methyladenosine (m6A) RNA, the most prevalent internal modification of messenger RNA (mRNA) in higher eukaryotes. Demethylates RNA by oxidative demethylation, which requires molecular oxygen, alpha-ketoglutarate and iron. Demethylation of m6A mRNA affects mRNA processing, translation and export. Can also demethylate N(6)-methyladenosine in single-stranded DNA (in vitro). Required for the late meiotic and haploid phases of spermatogenesis by mediating m6A demethylation in spermatocytes and round spermatids: m6A demethylation of target transcripts is required for correct splicing and the production of longer 3'-UTR mRNAs in male germ cells. Involved in paraspeckle assembly, a nuclear membraneless organelle, by undergoing liquid-liquid phase separation. Paraspeckle assembly is coupled with m6A demethylation of RNAs, such as NEAT1 non-coding RNA. Also acts as a negative regulator of T-cell development: inhibits gamma-delta T-cell proliferation via demethylation of JAG1 and NOTCH2 transcripts. Inhibits regulatory T-cell (Treg) recruitment by mediating demethylation and destabilization of CCL28 mRNAs. In Bos taurus (Bovine), this protein is RNA demethylase ALKBH5 (ALKBH5).